The chain runs to 415 residues: Nacrein-like protein C2 (415 aa).

A glycan (N-linked (GlcNAc...) asparagine) is linked at N27. The Alpha-carbonic anhydrase domain maps to 33–414 (AGFSYDRSIC…KNKVTVYKSF (382 aa)). The Zn(2+) site is built by H132, H134, and H157. The interval 201-297 (DEPDDEECKH…GENGHKHGCR (97 aa)) is disordered. Positions 207-219 (ECKHILKGHHPDN) are enriched in basic and acidic residues. Over residues 220–289 (NENGNGDNGN…NNGENGNNGE (70 aa)) the composition is skewed to low complexity. Repeat copies occupy residues 225-227 (GDN), 228-230 (GNN), 231-233 (GYN), 234-236 (GDN), 237-239 (GNN), 240-242 (GDN), 243-245 (GNN), 246-248 (GYN), 249-251 (GDN), 252-254 (GNN), 255-257 (GVN), 258-260 (GNN), 261-263 (GYN), 264-266 (GDN), 267-269 (GNN), 270-272 (GDN), 273-275 (GNN), 276-278 (GEN), 279-281 (GNN), 282-284 (GEN), 285-286 (GN), and 288-290 (GEN). Residues 225–290 (GDNGNNGYNG…NGENGNNGEN (66 aa)) form a 27 X 3 AA approximate tandem repeats of G-X-N region. Residue 355–356 (TT) coordinates substrate.

It belongs to the alpha-carbonic anhydrase family. As to quaternary structure, homooligomer; disulfide-linked. May also be disulfide-linked to insoluble organic matrix. It depends on Zn(2+) as a cofactor. As to expression, expressed in the mantle.

It localises to the secreted. The protein resides in the extracellular space. It is found in the extracellular matrix. The enzyme catalyses hydrogencarbonate + H(+) = CO2 + H2O. Its function is as follows. Acts as a negative regulator for calcification in the shells of mollusks. May function both as a calcium concentrator and as a carbonic anhydrase required for production of carbonate ions, which are assembled to CaCO(3) at mineralization sites. Is important for shell formation in both the calcitic prismatic layer and the aragonitic nacreous layer. Shows inhibitory activity of crystal formation when present in free state but, when attached to the insoluble matrix, may regulate the form and size of aragonite crystal. The protein is Nacrein-like protein C2 of Crassostrea nippona (Iwagaki oyster).